Here is a 114-residue protein sequence, read N- to C-terminus: Cytokine SCM-1 beta (114 aa).

An N-terminal signal peptide occupies residues 1–21; sequence MRLLILALLGICSLTAYIVEG. The cysteines at positions 32 and 69 are disulfide-linked. The disordered stretch occupies residues 91 to 114; the sequence is RNNMIQTKPTGTQQSTNTAVTLTG.

The protein belongs to the intercrine gamma family.

The protein localises to the secreted. Its function is as follows. Chemotactic activity for lymphocytes but not for monocytes or neutrophils. The polypeptide is Cytokine SCM-1 beta (XCL2) (Homo sapiens (Human)).